We begin with the raw amino-acid sequence, 458 residues long: Ig mu chain C region secreted form (458 aa).

A CH1 region spans residues 1–106 (VSLSSPTLYP…SNRDLRVSFP (106 aa)). A disulfide bond links Cys-28 and Cys-90. Asn-46 and Asn-114 each carry an N-linked (GlcNAc...) asparagine glycan. A CH2 region spans residues 107-222 (VDSELPPNVS…VSMSSECSTT (116 aa)). Residues Cys-137 and Cys-200 are joined by a disulfide bond. Asn-212, Asn-261, Asn-277, and Asn-284 each carry an N-linked (GlcNAc...) asparagine glycan. Residues 223 to 327 (PSPGIQVFPI…PLKHTISKSR (105 aa)) form a CH3 region. Intrachain disulfides connect Cys-249–Cys-308 and Cys-356–Cys-418. Positions 328-458 (EVAKHPPAVY…IMSDTASTCY (131 aa)) are CH4. Residue Asn-445 is glycosylated (N-linked (GlcNAc...) asparagine).

It localises to the secreted. The chain is Ig mu chain C region secreted form from Oryctolagus cuniculus (Rabbit).